A 69-amino-acid polypeptide reads, in one-letter code: Protein SlyX homolog (69 aa).

Belongs to the SlyX family.

The sequence is that of Protein SlyX homolog from Pseudomonas aeruginosa (strain LESB58).